The chain runs to 229 residues: Small ribosomal subunit protein uS3 (229 aa).

Residues 39–107 (VRQYLTEKLK…TAQINIAEIR (69 aa)) enclose the KH type-2 domain.

Belongs to the universal ribosomal protein uS3 family. As to quaternary structure, part of the 30S ribosomal subunit. Forms a tight complex with proteins S10 and S14.

In terms of biological role, binds the lower part of the 30S subunit head. Binds mRNA in the 70S ribosome, positioning it for translation. The chain is Small ribosomal subunit protein uS3 from Shewanella denitrificans (strain OS217 / ATCC BAA-1090 / DSM 15013).